The sequence spans 557 residues: Coiled-coil domain-containing protein 22 homolog (557 aa).

Coiled coils occupy residues 260–350 (RLGQ…LQSQ) and 489–554 (ELTA…AGRN).

Belongs to the CCDC22 family.

This Anopheles gambiae (African malaria mosquito) protein is Coiled-coil domain-containing protein 22 homolog.